The chain runs to 280 residues: Trypsin zeta (280 aa).

The signal sequence occupies residues 1-22; the sequence is MSSSWIVGLLAFLVSLVALTQG. The propeptide at 23-38 is activation peptide; the sequence is LPLLEDLDEKSVPDGR. The 240-residue stretch at 39–278 folds into the Peptidase S1 domain; sequence IVGGYATDIA…LRPWIDAVLA (240 aa). Cysteine 72 and cysteine 88 form a disulfide bridge. Residues histidine 87 and aspartate 134 each act as charge relay system in the active site. 2 cysteine pairs are disulfide-bonded: cysteine 198–cysteine 218 and cysteine 230–cysteine 254. The active-site Charge relay system is serine 234.

It belongs to the peptidase S1 family.

It localises to the secreted. The protein resides in the extracellular space. The enzyme catalyses Preferential cleavage: Arg-|-Xaa, Lys-|-Xaa.. The polypeptide is Trypsin zeta (zetaTry) (Drosophila melanogaster (Fruit fly)).